The primary structure comprises 397 residues: Acetate kinase (397 aa).

Asn-8 is a Mg(2+) binding site. Lys-15 contributes to the ATP binding site. Arg-89 contributes to the substrate binding site. Asp-146 acts as the Proton donor/acceptor in catalysis. Residues 206–210 (HLGNG), 281–283 (DLR), and 329–333 (GVGEN) contribute to the ATP site. Glu-382 is a binding site for Mg(2+).

It belongs to the acetokinase family. As to quaternary structure, homodimer. Mg(2+) is required as a cofactor. Mn(2+) serves as cofactor.

The protein localises to the cytoplasm. The catalysed reaction is acetate + ATP = acetyl phosphate + ADP. It functions in the pathway metabolic intermediate biosynthesis; acetyl-CoA biosynthesis; acetyl-CoA from acetate: step 1/2. In terms of biological role, catalyzes the formation of acetyl phosphate from acetate and ATP. Can also catalyze the reverse reaction. The polypeptide is Acetate kinase (Bacillus cereus (strain ATCC 10987 / NRS 248)).